Here is a 291-residue protein sequence, read N- to C-terminus: Segregation and condensation protein A (291 aa).

The protein belongs to the ScpA family. As to quaternary structure, component of a cohesin-like complex composed of ScpA, ScpB and the Smc homodimer, in which ScpA and ScpB bind to the head domain of Smc. The presence of the three proteins is required for the association of the complex with DNA.

It localises to the cytoplasm. Its function is as follows. Participates in chromosomal partition during cell division. May act via the formation of a condensin-like complex containing Smc and ScpB that pull DNA away from mid-cell into both cell halves. In Malacoplasma penetrans (strain HF-2) (Mycoplasma penetrans), this protein is Segregation and condensation protein A.